Reading from the N-terminus, the 312-residue chain is Acetyl-coenzyme A carboxylase carboxyl transferase subunit alpha (312 aa).

The CoA carboxyltransferase C-terminal domain occupies asparagine 36–glutamate 286.

It belongs to the AccA family. In terms of assembly, acetyl-CoA carboxylase is a heterohexamer composed of biotin carboxyl carrier protein (AccB), biotin carboxylase (AccC) and two subunits each of ACCase subunit alpha (AccA) and ACCase subunit beta (AccD).

The protein localises to the cytoplasm. It catalyses the reaction N(6)-carboxybiotinyl-L-lysyl-[protein] + acetyl-CoA = N(6)-biotinyl-L-lysyl-[protein] + malonyl-CoA. The protein operates within lipid metabolism; malonyl-CoA biosynthesis; malonyl-CoA from acetyl-CoA: step 1/1. Its function is as follows. Component of the acetyl coenzyme A carboxylase (ACC) complex. First, biotin carboxylase catalyzes the carboxylation of biotin on its carrier protein (BCCP) and then the CO(2) group is transferred by the carboxyltransferase to acetyl-CoA to form malonyl-CoA. The protein is Acetyl-coenzyme A carboxylase carboxyl transferase subunit alpha of Campylobacter jejuni subsp. jejuni serotype O:6 (strain 81116 / NCTC 11828).